The sequence spans 461 residues: Epidermin leader peptide-processing serine protease EpiP (461 aa).

Residues 1-23 (MNKFKFFIVFLILSLVFLQNEYA) form the signal peptide. In terms of domain architecture, Peptidase S8 spans 121–459 (QWDMRKITNE…NGKLDVYKLL (339 aa)). Catalysis depends on charge relay system residues D149, H194, and S402.

The protein belongs to the peptidase S8 family.

Its pathway is antibiotic biosynthesis; epidermin biosynthesis. Functionally, protease which cleaves the matured lantibiotic from the modified prepeptide. The sequence is that of Epidermin leader peptide-processing serine protease EpiP (epiP) from Staphylococcus epidermidis.